A 306-amino-acid polypeptide reads, in one-letter code: Aspartate carbamoyltransferase catalytic subunit (306 aa).

Carbamoyl phosphate-binding residues include R56 and T57. K84 is an L-aspartate binding site. Residues R106, H136, and Q139 each coordinate carbamoyl phosphate. Residues R169 and R221 each contribute to the L-aspartate site. 2 residues coordinate carbamoyl phosphate: A262 and P263.

It belongs to the aspartate/ornithine carbamoyltransferase superfamily. ATCase family. Heterododecamer (2C3:3R2) of six catalytic PyrB chains organized as two trimers (C3), and six regulatory PyrI chains organized as three dimers (R2).

It catalyses the reaction carbamoyl phosphate + L-aspartate = N-carbamoyl-L-aspartate + phosphate + H(+). It functions in the pathway pyrimidine metabolism; UMP biosynthesis via de novo pathway; (S)-dihydroorotate from bicarbonate: step 2/3. In terms of biological role, catalyzes the condensation of carbamoyl phosphate and aspartate to form carbamoyl aspartate and inorganic phosphate, the committed step in the de novo pyrimidine nucleotide biosynthesis pathway. The polypeptide is Aspartate carbamoyltransferase catalytic subunit (Streptococcus gordonii (strain Challis / ATCC 35105 / BCRC 15272 / CH1 / DL1 / V288)).